The sequence spans 466 residues: Ribulose bisphosphate carboxylase large chain (466 aa).

N6,N6,N6-trimethyllysine is present on Lys-5. Residues Asn-114 and Thr-164 each coordinate substrate. Lys-166 acts as the Proton acceptor in catalysis. Lys-168 contributes to the substrate binding site. Residues Lys-192, Asp-194, and Glu-195 each contribute to the Mg(2+) site. Lys-192 bears the N6-carboxylysine mark. Catalysis depends on His-285, which acts as the Proton acceptor. Substrate-binding residues include Arg-286, His-318, and Ser-370.

Belongs to the RuBisCO large chain family. Type I subfamily. As to quaternary structure, heterohexadecamer of 8 large chains and 8 small chains; disulfide-linked. The disulfide link is formed within the large subunit homodimers. Mg(2+) is required as a cofactor. In terms of processing, the disulfide bond which can form in the large chain dimeric partners within the hexadecamer appears to be associated with oxidative stress and protein turnover.

The protein localises to the plastid. It is found in the chloroplast. It catalyses the reaction 2 (2R)-3-phosphoglycerate + 2 H(+) = D-ribulose 1,5-bisphosphate + CO2 + H2O. The enzyme catalyses D-ribulose 1,5-bisphosphate + O2 = 2-phosphoglycolate + (2R)-3-phosphoglycerate + 2 H(+). RuBisCO catalyzes two reactions: the carboxylation of D-ribulose 1,5-bisphosphate, the primary event in carbon dioxide fixation, as well as the oxidative fragmentation of the pentose substrate in the photorespiration process. Both reactions occur simultaneously and in competition at the same active site. This Adoxa moschatellina (Moschatel) protein is Ribulose bisphosphate carboxylase large chain.